The primary structure comprises 221 residues: Glutathione peroxidase 6 (221 aa).

The signal sequence occupies residues methionine 1–alanine 19. The active site involves cysteine 73.

It belongs to the glutathione peroxidase family.

It localises to the secreted. The catalysed reaction is 2 glutathione + H2O2 = glutathione disulfide + 2 H2O. The sequence is that of Glutathione peroxidase 6 (Gpx6) from Mus musculus (Mouse).